Consider the following 393-residue polypeptide: Decapping nuclease dom-3 (393 aa).

A disordered region spans residues 1–37; that stretch reads MSHYGGNPRGNSSHQFGRKDFQQSDSKHIPKITGQPL. Residues 17-28 show a composition bias toward basic and acidic residues; that stretch reads GRKDFQQSDSKH. Substrate is bound by residues arginine 74, glutamate 113, and 144–146; that span reads WRG. Mg(2+) contacts are provided by glutamate 205, glutamate 257, aspartate 259, glutamate 269, and leucine 270. Residue glutamate 257 coordinates substrate. 2 residues coordinate substrate: lysine 271 and glutamine 293.

The protein belongs to the DXO/Dom3Z family. Requires Mg(2+) as cofactor.

It carries out the reaction a 5'-end NAD(+)-phospho-ribonucleoside in mRNA + H2O = a 5'-end phospho-ribonucleoside in mRNA + NAD(+) + H(+). The catalysed reaction is a 5'-end (N(7)-methyl 5'-triphosphoguanosine)-ribonucleoside-ribonucleotide in mRNA + H2O = a (N(7)-methyl 5'-triphosphoguanosine)-nucleoside + a 5'-end phospho-ribonucleoside in mRNA + H(+). It catalyses the reaction a 5'-end triphospho-ribonucleoside in mRNA + H2O = a 5'-end phospho-ribonucleoside in mRNA + diphosphate + H(+). Decapping enzyme for NAD-capped RNAs: specifically hydrolyzes the nicotinamide adenine dinucleotide (NAD) cap from a subset of RNAs by removing the entire NAD moiety from the 5'-end of an NAD-capped RNA. The NAD-cap is present at the 5'-end of some RNAs and snoRNAs. In contrast to the canonical 5'-end N7 methylguanosine (m7G) cap, the NAD cap promotes mRNA decay. Also acts as a non-canonical decapping enzyme that removes the entire cap structure of m7G capped or incompletely capped RNAs and mediates their subsequent degradation. Specifically degrades pre-mRNAs with a defective 5'-end m7G cap and is part of a pre-mRNA capping quality control. Also possesses RNA 5'-pyrophosphohydrolase activity by hydrolyzing the 5'-end triphosphate to release pyrophosphates. The protein is Decapping nuclease dom-3 of Caenorhabditis elegans.